Here is a 943-residue protein sequence, read N- to C-terminus: Isoleucine--tRNA ligase (943 aa).

The 'HIGH' region motif lies at 59-69 (PYANGQIHLGH). L-isoleucyl-5'-AMP is bound at residue E577. The 'KMSKS' region signature appears at 618–622 (KMSKS). Residue K621 participates in ATP binding. C906, C909, C926, and C929 together coordinate Zn(2+).

It belongs to the class-I aminoacyl-tRNA synthetase family. IleS type 1 subfamily. As to quaternary structure, monomer. It depends on Zn(2+) as a cofactor.

It is found in the cytoplasm. It catalyses the reaction tRNA(Ile) + L-isoleucine + ATP = L-isoleucyl-tRNA(Ile) + AMP + diphosphate. Its function is as follows. Catalyzes the attachment of isoleucine to tRNA(Ile). As IleRS can inadvertently accommodate and process structurally similar amino acids such as valine, to avoid such errors it has two additional distinct tRNA(Ile)-dependent editing activities. One activity is designated as 'pretransfer' editing and involves the hydrolysis of activated Val-AMP. The other activity is designated 'posttransfer' editing and involves deacylation of mischarged Val-tRNA(Ile). This is Isoleucine--tRNA ligase from Xylella fastidiosa (strain M23).